The following is a 490-amino-acid chain: UDP-glycosyltransferase 86A1 (490 aa).

Residues Ser294, Cys352–Gln354, His369–Glu377, and Leu391–Gln394 contribute to the UDP-alpha-D-glucose site.

The protein belongs to the UDP-glycosyltransferase family.

In Arabidopsis thaliana (Mouse-ear cress), this protein is UDP-glycosyltransferase 86A1 (UGT86A1).